Consider the following 675-residue polypeptide: MNNNGNALSRTALTPTNNKVISGDLVTNGLPPIDNNIICSNGFMPINVTRKNPFRKRTTQEFIREWTEWKENSPSLFTAPIVGVVTSTLLEALKKQVQSRLLLLMTNLLFPNNSTSTMEEILRATEQYVQEQLDTVTWNRVSQELEGLKNNLRTFNDQIDDFLQNRVEISPTAMIDSINTMQQVFVNRLPQFQLSDYQLLLLPLFAQGATLHLTFIRDIIINAGEWNIPEAQLNTCKRYLKQYVAQYSNYALSTYEGAFRARFYPRATLENMLQFKTFMTLNVLDLVSIWSLLKYMNLYISTSANLYNIGDNKVNEGEYSISYWPFFNSYIQTKSNYVLSGVSGYAIRWYYLNTFFGEYIQDNLYNIIASYVGGVNGPKIGVQLSTTELDKQIKQQARAGMPTGLDDLSFNCTLRNPTTVPYFACNFQELTSSGTAGTGGFIRSDVFRSEDNICGLGTGYASAWTSYPDYYITNISATVQVDGINIDITPLCFGEDRAITSTHGVNKVIAVYNRKANIAGTNQNGTMIHQAPNDGTGFTVSPLHLASFTHPSEAHIQENYGNSGDSLRLTGPTTAITYMLSGDGRTIYKLVLRVSGVITRITAKVRGNSIGYLEYINTVDNNQGITDNGSKFQDFEFRPTITIDAQTPIVLEFSATSNFDLMNLIFIPYYDTPIY.

Belongs to the delta endotoxin family.

In terms of biological role, binds to the brush border membrane vesicles of scarab larvae and damages the gut wall somehow to allow the vegetative cells of P.popilliae to enter the hemolymph. This Paenibacillus popilliae (Bacillus popilliae) protein is Parasporal crystal protein Cry18Ba (cry18Ba).